A 1418-amino-acid polypeptide reads, in one-letter code: MSDSPLSKRQKRKSAQEPELSLDQGDAEEDSQVENRVNLSENTPEPDLPALEASYSKSYTPRKLVLSSGENRYAFSQPTNSTTTSLHVPNLQPPKTSSRGRDHKSYSQSPPRSPGRSPTRRLELLQLSPVKNSRVELQKIYDRHQSSSKQQSRLFINELVLENFKSYAGKQVVGPFHTSFSAVVGPNGSGKSNVIDSMLFVFGFRANKMRQDRLSDLIHKSEAFPSLQSCSVAVHFQYVIDESSGTSRIDEEKPGLIITRKAFKNNSSKYYINEKESSYTEVTKLLKNEGIDLDHKRFLILQGEVENIAQMKPKAEKESDDGLLEYLEDIIGTANYKPLIEERMGQIENLNEVCLEKENRFEIVDREKNSLESGKETALEFLEKEKQLTLLRSKLFQFKLLQSNSKLASTLEKISSSNKDLEDEKMKFQESLKKVDEIKAQRKEIKDRISSCSSKEKTLVLERRELEGTRVSLEERTKNLVSKMEKAEKTLKSTKHSISEAENMLEELRGQQTEHETEIKDLTQLLEKERSILDDIKLSLKDKTKNISAEIIRHEKELEPWDLQLQEKESQIQLAESELSLLEETQAKLKKNVETLEEKILAKKTHKQELQDLILDLKKKLNSLKDERSQGEKNFTSAHLKLKEMQKVLNAHRQRAMEARSSLSKAQNKSKVLTALSRLQKSGRINGFHGRLGDLGVIDDSFDVAISTACPRLDDVVVDTVECAQHCIDYLRKNKLGYARFILLDRLRQFNLQPISTPENVPRLFDLVKPKNPKFSNAFYSVLRDTLVAQNLKQANNVAYGKKRFRVVTVDGKLIDISGTMSGGGNHVAKGLMKLGTNQSDKVDDYTPEEVDKIERELSERENNFRVASDTVHEMEEELKKLRDHEPDLESQISKAEMEADSLASELTLAEQQVKEAEMAYVKAVSDKAQLNVVMKNLERLRGEYNDLQSETKTKKEKIKGLQDEIMKIGGIKLQMQNSKVESVCQKLDILVAKLKKVKSASKKSGGDVVKFQKLLQNSERDVELSSDELKVIEEQLKHTKLALAENDTNMNETLNLKVELKEQSEQLKEQMEDMEESINEFKSIEIEMKNKLEKLNSLLTYIKSEITQQEKGLNELSIRDVTHTLGMLDDNKMDSVKEDVKNNQELDQEYRSCETQDESEIKDAETSCDNYHPMNIDETSDEVSRGIPRLSEDELRELDVELIESKINELSYYVEETNVDIGVLEEYARRLAEFKRRKLDLNNAVQKRDEVKEQLGILKKKRFDEFMAGFNIISMTLKEMYQMITMGGNAELELVDSLDPFSEGVTFSVMPPKKSWRNITNLSGGEKTLSSLALVFALHKYKPTPLYVMDEIDAALDFRNVSIVANYIKERTKNAQFIVISLRNNMFELAQQLVGVYKRDNRTKSTTIKNIDILNRT.

Residues 1-122 (MSDSPLSKRQ…SPGRSPTRRL (122 aa)) form a disordered region. S2 is subject to N-acetylserine. Composition is skewed to polar residues over residues 34–43 (ENRVNLSENT) and 68–97 (SGENRYAFSQPTNSTTTSLHVPNLQPPKTS). T43 carries the phosphothreonine modification. The span at 107-117 (SQSPPRSPGRS) shows a compositional bias: low complexity. S113 bears the Phosphoserine mark. 185–192 (GPNGSGKS) lines the ATP pocket. A coiled-coil region spans residues 345-673 (GQIENLNEVC…SKAQNKSKVL (329 aa)). The SMC hinge domain maps to 686–799 (NGFHGRLGDL…QNLKQANNVA (114 aa)). 2 coiled-coil regions span residues 849–1172 (EEVD…CDNY) and 1224–1263 (VLEEYARRLAEFKRRKLDLNNAVQKRDEVKEQLGILKKKR).

Belongs to the SMC family. SMC4 subfamily. Forms a heterodimer with SMC2. Component of the condensin complex, which contains the SMC2 and SMC4 heterodimer, and three non SMC subunits that probably regulate the complex: BRN1, YCS4 and YCG1/YCS5.

The protein localises to the nucleus. It is found in the cytoplasm. Its subcellular location is the chromosome. In terms of biological role, central component of the condensin complex, a complex required for conversion of interphase chromatin into mitotic-like condense chromosomes. The condensin complex probably introduces positive supercoils into relaxed DNA in the presence of type I topoisomerases and converts nicked DNA into positive knotted forms in the presence of type II topoisomerases. The chain is Structural maintenance of chromosomes protein 4 (SMC4) from Saccharomyces cerevisiae (strain ATCC 204508 / S288c) (Baker's yeast).